Reading from the N-terminus, the 176-residue chain is Shikimate kinase (176 aa).

12 to 17 (GSGKST) is a binding site for ATP. Ser16 contributes to the Mg(2+) binding site. 3 residues coordinate substrate: Asp34, Arg58, and Gly80. An ATP-binding site is contributed by Arg117. Position 136 (Arg136) interacts with substrate. Arg153 is an ATP binding site.

It belongs to the shikimate kinase family. In terms of assembly, monomer. Mg(2+) serves as cofactor.

It localises to the cytoplasm. The catalysed reaction is shikimate + ATP = 3-phosphoshikimate + ADP + H(+). It participates in metabolic intermediate biosynthesis; chorismate biosynthesis; chorismate from D-erythrose 4-phosphate and phosphoenolpyruvate: step 5/7. Its function is as follows. Catalyzes the specific phosphorylation of the 3-hydroxyl group of shikimic acid using ATP as a cosubstrate. The protein is Shikimate kinase of Mycobacterium bovis (strain ATCC BAA-935 / AF2122/97).